An 825-amino-acid polypeptide reads, in one-letter code: Translation initiation factor IF-2 (825 aa).

Composition is skewed to basic and acidic residues over residues 1–19 (MTKK…DNKK), 35–45 (RKGEKKTEGKR), 70–98 (LLKD…EYKK), and 113–122 (KKVESVEKPA). Residues 1 to 239 (MTKKQENETS…TQRKDRPLPE (239 aa)) are disordered. Over residues 158-169 (PSSSRRPSSRPS) the composition is skewed to low complexity. The span at 181–191 (GRRRKSGKPGR) shows a compositional bias: basic residues. The span at 194–208 (QNSYADQGRGANSNR) shows a compositional bias: polar residues. The segment covering 211-220 (QRKRKNKKHQ) has biased composition (basic residues). Residues 326–495 (VRPPVVTIMG…ILEADMLELK (170 aa)) form the tr-type G domain. The tract at residues 335 to 342 (GHVDHGKT) is G1. GTP is bound at residue 335–342 (GHVDHGKT). Residues 360 to 364 (GITQN) form a G2 region. The interval 381-384 (DTPG) is G3. GTP-binding positions include 381-385 (DTPGH) and 435-438 (NKMD). A G4 region spans residues 435-438 (NKMD). The tract at residues 471 to 473 (SAK) is G5.

This sequence belongs to the TRAFAC class translation factor GTPase superfamily. Classic translation factor GTPase family. IF-2 subfamily.

Its subcellular location is the cytoplasm. Its function is as follows. One of the essential components for the initiation of protein synthesis. Protects formylmethionyl-tRNA from spontaneous hydrolysis and promotes its binding to the 30S ribosomal subunits. Also involved in the hydrolysis of GTP during the formation of the 70S ribosomal complex. The chain is Translation initiation factor IF-2 from Lactobacillus delbrueckii subsp. bulgaricus (strain ATCC 11842 / DSM 20081 / BCRC 10696 / JCM 1002 / NBRC 13953 / NCIMB 11778 / NCTC 12712 / WDCM 00102 / Lb 14).